The following is a 214-amino-acid chain: MITIALSKGRIFEETTPLLAAAGITALEDPEASRKLILPTNRSDVRLIIVRATDVPTYVQYGAADLGIAGKDVLDEHGGEGLYQPLDLNIARCRMMVAVREDFDYVGSIRRGARLKVVTKYVKTAREHFAAKGMHVDLIKLYGSMELGPLVGLADAIVDLVSTGGTLRANNLKAVEEITDISSRLVVNQASLKLKRDQLQPIMDAFAQAVAANQ.

This sequence belongs to the ATP phosphoribosyltransferase family. Short subfamily. Heteromultimer composed of HisG and HisZ subunits.

The protein localises to the cytoplasm. It catalyses the reaction 1-(5-phospho-beta-D-ribosyl)-ATP + diphosphate = 5-phospho-alpha-D-ribose 1-diphosphate + ATP. Its pathway is amino-acid biosynthesis; L-histidine biosynthesis; L-histidine from 5-phospho-alpha-D-ribose 1-diphosphate: step 1/9. Functionally, catalyzes the condensation of ATP and 5-phosphoribose 1-diphosphate to form N'-(5'-phosphoribosyl)-ATP (PR-ATP). Has a crucial role in the pathway because the rate of histidine biosynthesis seems to be controlled primarily by regulation of HisG enzymatic activity. In Methylobacillus flagellatus (strain ATCC 51484 / DSM 6875 / VKM B-1610 / KT), this protein is ATP phosphoribosyltransferase.